The sequence spans 293 residues: Elongation factor Ts (293 aa).

Residues 79-82 (TDFV) form an involved in Mg(2+) ion dislocation from EF-Tu region.

Belongs to the EF-Ts family.

The protein resides in the cytoplasm. In terms of biological role, associates with the EF-Tu.GDP complex and induces the exchange of GDP to GTP. It remains bound to the aminoacyl-tRNA.EF-Tu.GTP complex up to the GTP hydrolysis stage on the ribosome. The chain is Elongation factor Ts (tsf) from Halalkalibacterium halodurans (strain ATCC BAA-125 / DSM 18197 / FERM 7344 / JCM 9153 / C-125) (Bacillus halodurans).